The primary structure comprises 335 residues: Biotin synthase (335 aa).

Residues Ala-50–Arg-279 enclose the Radical SAM core domain. [4Fe-4S] cluster is bound by residues Cys-65, Cys-69, and Cys-72. Positions 110, 142, 202, and 274 each coordinate [2Fe-2S] cluster.

This sequence belongs to the radical SAM superfamily. Biotin synthase family. Homodimer. Requires [4Fe-4S] cluster as cofactor. The cofactor is [2Fe-2S] cluster.

It carries out the reaction (4R,5S)-dethiobiotin + (sulfur carrier)-SH + 2 reduced [2Fe-2S]-[ferredoxin] + 2 S-adenosyl-L-methionine = (sulfur carrier)-H + biotin + 2 5'-deoxyadenosine + 2 L-methionine + 2 oxidized [2Fe-2S]-[ferredoxin]. Its pathway is cofactor biosynthesis; biotin biosynthesis; biotin from 7,8-diaminononanoate: step 2/2. In terms of biological role, catalyzes the conversion of dethiobiotin (DTB) to biotin by the insertion of a sulfur atom into dethiobiotin via a radical-based mechanism. The polypeptide is Biotin synthase (Methylorubrum extorquens (strain CM4 / NCIMB 13688) (Methylobacterium extorquens)).